The sequence spans 187 residues: Elongation factor P (187 aa).

This sequence belongs to the elongation factor P family.

Its subcellular location is the cytoplasm. It participates in protein biosynthesis; polypeptide chain elongation. Its function is as follows. Involved in peptide bond synthesis. Stimulates efficient translation and peptide-bond synthesis on native or reconstituted 70S ribosomes in vitro. Probably functions indirectly by altering the affinity of the ribosome for aminoacyl-tRNA, thus increasing their reactivity as acceptors for peptidyl transferase. The polypeptide is Elongation factor P (Helicobacter hepaticus (strain ATCC 51449 / 3B1)).